The chain runs to 133 residues: Large-conductance mechanosensitive channel (133 aa).

The next 2 helical transmembrane spans lie at 14-34 (VVDL…VSSL) and 67-87 (GNFI…FMFV).

It belongs to the MscL family. Homopentamer.

It is found in the cell membrane. Its function is as follows. Channel that opens in response to stretch forces in the membrane lipid bilayer. May participate in the regulation of osmotic pressure changes within the cell. This chain is Large-conductance mechanosensitive channel, found in Bacillus cereus (strain AH187).